The following is a 183-amino-acid chain: uncharacterized protein (183 aa).

An N-terminal signal peptide occupies residues 1-17 (MVLFILVLYTCIQDGNG).

This is an uncharacterized protein from Saccharomyces cerevisiae (strain ATCC 204508 / S288c) (Baker's yeast).